The primary structure comprises 210 residues: Protein RFS1 (210 aa).

The Flavodoxin-like domain maps to 4–203 (VAILIYSVDD…RVHQLQGKAF (200 aa)).

Belongs to the WrbA family.

It localises to the cytoplasm. The protein localises to the membrane raft. In Saccharomyces cerevisiae (strain ATCC 204508 / S288c) (Baker's yeast), this protein is Protein RFS1 (RFS1).